Here is a 176-residue protein sequence, read N- to C-terminus: Mitochondrial inner membrane protein Mpv17 (176 aa).

4 helical membrane passes run 18–38 (VQVLTAGSLMGLGDIISQQLV), 53–73 (TMVSLGCGFVGPVVGGWYKVL), 94–114 (GGFAPCFLGCFLPLVGALNGL), and 131–151 (LITNYYLWPAVQLANFYLVPL).

It belongs to the peroxisomal membrane protein PXMP2/4 family. In terms of tissue distribution, ubiquitous. Expressed in pancreas, kidney, muscle, liver, lung, placenta, brain and heart.

The protein resides in the mitochondrion inner membrane. Functionally, non-selective channel that modulates the membrane potential under normal conditions and oxidative stress, and is involved in mitochondrial homeostasis. Involved in mitochondrial deoxynucleoside triphosphates (dNTP) pool homeostasis and mitochondrial DNA (mtDNA) maintenance. May be involved in the regulation of reactive oxygen species metabolism and the control of oxidative phosphorylation. This Homo sapiens (Human) protein is Mitochondrial inner membrane protein Mpv17.